The following is a 530-amino-acid chain: T-complex protein 1 subunit zeta-2 (530 aa).

It belongs to the TCP-1 chaperonin family. In terms of assembly, component of the chaperonin-containing T-complex (TRiC), a heterooligomeric complex of about 850 to 900 kDa that forms two stacked rings, 12 to 16 nm in diameter. Testis-specific.

Its subcellular location is the cytoplasm. Component of the chaperonin-containing T-complex (TRiC), a molecular chaperone complex that assists the folding of proteins upon ATP hydrolysis. This is T-complex protein 1 subunit zeta-2 (CCT6B) from Homo sapiens (Human).